Here is a 500-residue protein sequence, read N- to C-terminus: Probable malate:quinone oxidoreductase (500 aa).

Belongs to the MQO family. FAD is required as a cofactor.

The catalysed reaction is (S)-malate + a quinone = a quinol + oxaloacetate. It functions in the pathway carbohydrate metabolism; tricarboxylic acid cycle; oxaloacetate from (S)-malate (quinone route): step 1/1. This is Probable malate:quinone oxidoreductase from Bacillus cereus (strain ATCC 10987 / NRS 248).